The following is a 638-amino-acid chain: Probable glycerol-3-phosphate dehydrogenase, mitochondrial (638 aa).

100–128 is an FAD binding site; sequence DLIVIGGGATGTGVALDAQSRGMKVALFE.

This sequence belongs to the FAD-dependent glycerol-3-phosphate dehydrogenase family. FAD serves as cofactor.

It is found in the mitochondrion. The enzyme catalyses a quinone + sn-glycerol 3-phosphate = dihydroxyacetone phosphate + a quinol. It functions in the pathway polyol metabolism; glycerol degradation via glycerol kinase pathway; glycerone phosphate from sn-glycerol 3-phosphate (anaerobic route): step 1/1. This is Probable glycerol-3-phosphate dehydrogenase, mitochondrial from Dictyostelium discoideum (Social amoeba).